The chain runs to 196 residues: tRNA (pseudouridine(54)-N(1))-methyltransferase (196 aa).

Leu126 contacts S-adenosyl-L-methionine.

It belongs to the methyltransferase superfamily. TrmY family. Homodimer.

The protein resides in the cytoplasm. The catalysed reaction is pseudouridine(54) in tRNA + S-adenosyl-L-methionine = N(1)-methylpseudouridine(54) in tRNA + S-adenosyl-L-homocysteine + H(+). Specifically catalyzes the N1-methylation of pseudouridine at position 54 (Psi54) in tRNAs. The sequence is that of tRNA (pseudouridine(54)-N(1))-methyltransferase from Halobacterium salinarum (strain ATCC 700922 / JCM 11081 / NRC-1) (Halobacterium halobium).